The chain runs to 70 residues: uncharacterized protein (70 aa).

This is an uncharacterized protein from Dictyostelium discoideum (Social amoeba).